The chain runs to 98 residues: Putative pterin-4-alpha-carbinolamine dehydratase (98 aa).

The protein belongs to the pterin-4-alpha-carbinolamine dehydratase family.

The catalysed reaction is (4aS,6R)-4a-hydroxy-L-erythro-5,6,7,8-tetrahydrobiopterin = (6R)-L-erythro-6,7-dihydrobiopterin + H2O. In Roseobacter denitrificans (strain ATCC 33942 / OCh 114) (Erythrobacter sp. (strain OCh 114)), this protein is Putative pterin-4-alpha-carbinolamine dehydratase.